A 128-amino-acid polypeptide reads, in one-letter code: Small ribosomal subunit protein eS8 (128 aa).

The protein belongs to the eukaryotic ribosomal protein eS8 family. As to quaternary structure, part of the 30S ribosomal subunit.

This chain is Small ribosomal subunit protein eS8, found in Methanococcus maripaludis (strain C7 / ATCC BAA-1331).